Here is a 276-residue protein sequence, read N- to C-terminus: Orotidine 5'-phosphate decarboxylase (276 aa).

K93 functions as the Proton donor in the catalytic mechanism.

It belongs to the OMP decarboxylase family. Type 2 subfamily.

It carries out the reaction orotidine 5'-phosphate + H(+) = UMP + CO2. The protein operates within pyrimidine metabolism; UMP biosynthesis via de novo pathway; UMP from orotate: step 2/2. This Halorubrum lacusprofundi (strain ATCC 49239 / DSM 5036 / JCM 8891 / ACAM 34) protein is Orotidine 5'-phosphate decarboxylase.